Here is a 212-residue protein sequence, read N- to C-terminus: Uracil phosphoribosyltransferase (212 aa).

5-phospho-alpha-D-ribose 1-diphosphate contacts are provided by residues arginine 78, arginine 103, and 130-138 (DPMLATGSS). Residues isoleucine 193 and 198–200 (GDA) each bind uracil. Aspartate 199 serves as a coordination point for 5-phospho-alpha-D-ribose 1-diphosphate.

This sequence belongs to the UPRTase family. Requires Mg(2+) as cofactor.

It catalyses the reaction UMP + diphosphate = 5-phospho-alpha-D-ribose 1-diphosphate + uracil. The protein operates within pyrimidine metabolism; UMP biosynthesis via salvage pathway; UMP from uracil: step 1/1. Its activity is regulated as follows. Allosterically activated by GTP. Its function is as follows. Catalyzes the conversion of uracil and 5-phospho-alpha-D-ribose 1-diphosphate (PRPP) to UMP and diphosphate. The protein is Uracil phosphoribosyltransferase of Pseudomonas fluorescens (strain ATCC BAA-477 / NRRL B-23932 / Pf-5).